Consider the following 354-residue polypeptide: Arginase-2, mitochondrial (354 aa).

Residues 1-22 (MFLRSSVSRLLHGQIPCALTRS) constitute a mitochondrion transit peptide. Positions 120, 143, 145, and 147 each coordinate Mn(2+). Residues 145 to 149 (HADIN), 156 to 158 (SGN), and Glu202 each bind substrate. Mn(2+)-binding residues include Asp251 and Asp253. 2 residues coordinate substrate: Thr265 and Glu296.

It belongs to the arginase family. Homotrimer. Requires Mn(2+) as cofactor.

The protein resides in the mitochondrion. It catalyses the reaction L-arginine + H2O = urea + L-ornithine. Its pathway is nitrogen metabolism; urea cycle; L-ornithine and urea from L-arginine: step 1/1. In terms of biological role, may play a role in the regulation of extra-urea cycle arginine metabolism and also in down-regulation of nitric oxide synthesis. Extrahepatic arginase functions to regulate L-arginine bioavailability to nitric oxid synthase (NOS). Arginine metabolism is a critical regulator of innate and adaptive immune responses. Seems to be involved in negative regulation of the survival capacity of activated T cells. May suppress inflammation-related signaling in asthmatic airway epithelium. May play a role in promoting prenatal immune suppression. Regulates RPS6KB1 signaling, which promotes endothelial cell senescence and inflammation and implicates NOS3/eNOS dysfunction. Can inhibit endothelial autophagy independently of its enzymatic activity implicating mTORC2 signaling. Involved in vascular smooth muscle cell senescence and apoptosis independently of its enzymatic activity. The sequence is that of Arginase-2, mitochondrial (Arg2) from Rattus norvegicus (Rat).